Reading from the N-terminus, the 670-residue chain is ATP-dependent DNA helicase Rep (670 aa).

One can recognise a UvrD-like helicase ATP-binding domain in the interval 1 to 277 (MLFNEHQKKA…IIMQHNYRSS (277 aa)). ATP is bound by residues 22 to 29 (AGAGSGKT) and Arg275. The 285-residue stretch at 278–562 (GRILKVANAL…QLMTLHASKG (285 aa)) folds into the UvrD-like helicase C-terminal domain.

Belongs to the helicase family. UvrD subfamily. Homodimer.

It catalyses the reaction Couples ATP hydrolysis with the unwinding of duplex DNA by translocating in the 3'-5' direction.. The enzyme catalyses ATP + H2O = ADP + phosphate + H(+). Rep helicase is a single-stranded DNA-dependent ATPase involved in DNA replication; it can initiate unwinding at a nick in the DNA. It binds to the single-stranded DNA and acts in a progressive fashion along the DNA in the 3' to 5' direction. This Buchnera aphidicola subsp. Baizongia pistaciae (strain Bp) protein is ATP-dependent DNA helicase Rep.